The following is a 416-amino-acid chain: Geranyl diphosphate synthase (416 aa).

The Mg(2+) site is built by aspartate 157 and aspartate 161. Positions 157–161 (DDIMD) match the DDXXD motif motif.

This sequence belongs to the FPP/GGPP synthase family. It depends on Mg(2+) as a cofactor. Specifically expressed in the anterior midgut of male beetles, the site of aggregation pheromone biosynthesis.

It catalyses the reaction isopentenyl diphosphate + dimethylallyl diphosphate = (2E)-geranyl diphosphate + diphosphate. The protein operates within pheromone biosynthesis. In terms of biological role, geranyl diphosphate synthase involved in pheromone biosynthesis. The polypeptide is Geranyl diphosphate synthase (Ips pini (Pine engraver beetle)).